The chain runs to 861 residues: Ribosome biogenesis protein BOP1 homolog (861 aa).

Residues 1–237 (MVANKSKATK…GDTSDEEDIR (237 aa)) are disordered. Residues 29–45 (NGRSTKQPEADSDQSAS) show a composition bias toward polar residues. Composition is skewed to acidic residues over residues 62–77 (DDGDSSDSEGEGDASD) and 87–143 (SDSD…EDLA). Basic and acidic residues-rich tracts occupy residues 144-156 (EPEKPRAIKEGSK), 174-190 (ETKKLLEAAAKEDEKLA), and 212-223 (PERKTGRLKNSD). WD repeat units follow at residues 522-561 (GHTDMIRTISIEPKGEYLVTGSDDKTIKIWEVSTARCIKT), 563-603 (PTGD…CLLS), 692-730 (KSKGLIQCVLFHPVKPCLFVATQRHIRVYDLVKQELLKK), 733-772 (PSCKWISSMAIHPKGDNLLVATYEKKMMWFDLDLSTRPYQ), 776-815 (LHFSAIRNVAFHQRYPLFASASDDRSVIVSHGMVYNDLMQ), and 831-861 (VNDFGAFDVVFHPTQPWLFSSGADNTVRLYT).

Belongs to the WD repeat BOP1/ERB1 family.

The protein resides in the nucleus. It localises to the nucleolus. The protein localises to the nucleoplasm. Functionally, required for maturation of ribosomal RNAs and formation of the large ribosomal subunit. The protein is Ribosome biogenesis protein BOP1 homolog of Culex quinquefasciatus (Southern house mosquito).